The sequence spans 310 residues: Olfactory receptor 5P80 (310 aa).

The Extracellular segment spans residues 1–25 (MEPGNYTVVTEVILLGFTEDAIIRA). Asn-5 carries an N-linked (GlcNAc...) asparagine glycan. Residues 26-46 (ILFIVFLIIYSVTLMGNASII) traverse the membrane as a helical segment. Over 47–54 (MLIRRSPQ) the chain is Cytoplasmic. Residues 55–75 (LHTPMYLLLSHLAFVDIGYSS) form a helical membrane-spanning segment. Topologically, residues 76–99 (SVTPIMLKGFLRKETFILVSGCVA) are extracellular. A disulfide bond links Cys-97 and Cys-189. Residues 100 to 120 (QLCSVVTFGSTECFLLAAMAY) form a helical membrane-spanning segment. The Cytoplasmic portion of the chain corresponds to 121–133 (DRYVAICSPLLYA). A helical membrane pass occupies residues 134 to 154 (TQMSSTVCILLVGASYLGGCV). Over 155-196 (NAWTFTGCLLNLSFCRPNKVNHFFCDYSPLLKISCSHDFSSE) the chain is Extracellular. A glycan (N-linked (GlcNAc...) asparagine) is linked at Asn-165. The chain crosses the membrane as a helical span at residues 197–217 (VIPAISSGSIIVVTVFIIALS). Topologically, residues 218–237 (YVYILVSILKMRSTEGRQKA) are cytoplasmic. Residues 238–258 (FSTCTSHLTAVTLFYGTITFI) form a helical membrane-spanning segment. Over 259 to 271 (YVMPKSSYSTDQN) the chain is Extracellular. The helical transmembrane segment at 272-292 (KVVSVFYTVVIPMLNPIIYSL) threads the bilayer. The Cytoplasmic segment spans residues 293 to 310 (RNKDVKEAMKKLMANTHH).

This sequence belongs to the G-protein coupled receptor 1 family.

It is found in the cell membrane. Functionally, potential odorant receptor. The sequence is that of Olfactory receptor 5P80 from Mus musculus (Mouse).